A 308-amino-acid chain; its full sequence is Dual oxidase maturation factor 1 (308 aa).

The Extracellular segment spans residues 1–21; that stretch reads MQANIFPFYPQPRTSFKFDTK. A helical membrane pass occupies residues 22-42; it reads IIEIIIICIVTACTFIIILPG. Over 43 to 49 the chain is Cytoplasmic; the sequence is IRGKSRS. The chain crosses the membrane as a helical span at residues 50-70; it reads IWLFRILTSLFIGAVILAVNF. Residues 71-172 lie on the Extracellular side of the membrane; the sequence is TSDWETGIVT…SPCGLFQQYC (102 aa). 3 N-linked (GlcNAc...) asparagine glycosylation sites follow: Asn-94, Asn-107, and Asn-119. A helical membrane pass occupies residues 173–195; the sequence is ISTYYSSEIMWVAFGSWILYNVL. Over 196 to 199 the chain is Cytoplasmic; sequence FSMP. Residues 200 to 220 traverse the membrane as a helical segment; that stretch reads VILYGICMMFVTAICMLVSLI. Over 221–247 the chain is Extracellular; the sequence is SFASVRQAPVCNIHFGNAVLKTHFGVS. Residues 248–268 traverse the membrane as a helical segment; sequence YWLSLVTGLFCLIVSLVLLFL. The Cytoplasmic portion of the chain corresponds to 269–308; it reads YKTQPKVIRLIFSYGEEEDLSDKSENEEEHSSALSLNEML.

It belongs to the DUOXA family.

It is found in the membrane. Its function is as follows. Possible role in maturation and transport from the endoplasmic reticulum to the plasma membrane of functional dual oxidase. The chain is Dual oxidase maturation factor 1 (duoxa1) from Xenopus tropicalis (Western clawed frog).